The following is a 442-amino-acid chain: NAD(P)H sulfur oxidoreductase (CoA-dependent) (442 aa).

13-14 contacts FAD; the sequence is AA. R24 contacts CoA. Residues 35–36 and 42–44 each bind FAD; these read EA and HAP. CoA contacts are provided by residues 41 to 45, 62 to 63, and R72; these read SHAPC and HY. The Redox-active role is filled by C45. The FAD site is built by V82, D280, and A298. N302 and K358 together coordinate CoA. Y422 is a binding site for FAD. Residues W430 and R438 each contribute to the CoA site.

It belongs to the class-III pyridine nucleotide-disulfide oxidoreductase family. Homodimer. It depends on FAD as a cofactor.

It localises to the cytoplasm. The enzyme catalyses hydrogen sulfide + NADP(+) = sulfur + NADPH. It catalyses the reaction hydrogen sulfide + NAD(+) = sulfur + NADH. It carries out the reaction NADP(+) + 2 CoA = CoA-disulfide + NADPH + H(+). The catalysed reaction is NAD(+) + 2 CoA = CoA-disulfide + NADH + H(+). Functionally, catalyzes the CoA-dependent reduction of elemental sulfur (S(0)) to produce hydrogen sulfide. Can use both NADPH and NADH, but shows a preference for NADPH. May enable S(0) to be used, via sulfide, for iron-sulfur cluster synthesis by SipA. Also shows coenzyme A disulfide reductase (CoADR) activity with both NADH and NADPH. However, CoADR specific activity is about 20-fold lower than the sulfur reduction assay and CoADR activity appears to be an artifactual side reaction and is not thought to have any physiological relevance. Also shows NAD(P)H oxidase activity with both NADH and NADPH. This is NAD(P)H sulfur oxidoreductase (CoA-dependent) from Pyrococcus furiosus (strain ATCC 43587 / DSM 3638 / JCM 8422 / Vc1).